The primary structure comprises 329 residues: Flotillin-like protein FloA (329 aa).

The helical transmembrane segment at 4 to 24 threads the bilayer; it reads IWGFLILILVLIFLGVFFSFV.

The protein belongs to the flotillin-like FloA family. As to quaternary structure, homooligomerizes.

It localises to the cell membrane. The protein localises to the membrane raft. In terms of biological role, found in functional membrane microdomains (FMM) that may be equivalent to eukaryotic membrane rafts. FMMs are highly dynamic and increase in number as cells age. Flotillins are thought to be important factors in membrane fluidity. The sequence is that of Flotillin-like protein FloA from Dictyoglomus turgidum (strain DSM 6724 / Z-1310).